The following is a 309-amino-acid chain: Nucleotide-binding protein cgR_1639 (309 aa).

32–39 is an ATP binding site; it reads GMSGAGLS. 83–86 is a GTP binding site; sequence DVRS.

It belongs to the RapZ-like family.

Functionally, displays ATPase and GTPase activities. The protein is Nucleotide-binding protein cgR_1639 of Corynebacterium glutamicum (strain R).